The primary structure comprises 102 residues: Cytochrome c3 (102 aa).

His-26, His-29, Cys-34, Cys-37, His-38, His-39, Cys-50, Cys-55, His-56, His-73, Cys-81, Cys-84, His-85, Cys-95, Cys-98, and His-99 together coordinate heme c.

Heme is required as a cofactor.

It is found in the periplasm. Its function is as follows. Participates in sulfate respiration coupled with phosphorylation by transferring electrons from the enzyme dehydrogenase to ferredoxin. The chain is Cytochrome c3 from Desulfovibrio desulfuricans.